The following is a 119-amino-acid chain: MSVDKRTLIAVIGDEDTTTGLLLAGIGQITKETNEKNFFIYEDGKTTKEQILNNFINYTQERQDIAILLINQHIAEKIRSDIDNYTNAFPAILEIPSKDHPYDPEKDSVLKRVRRLFGE.

Belongs to the V-ATPase F subunit family. In terms of assembly, V-ATPase is a heteromultimeric enzyme composed of a peripheral catalytic V1 complex (components A to H) attached to an integral membrane V0 proton pore complex (components: a, c, c', c'', d, e, f and VOA1).

The protein resides in the vacuole membrane. In terms of biological role, subunit of the V1 complex of vacuolar(H+)-ATPase (V-ATPase), a multisubunit enzyme composed of a peripheral complex (V1) that hydrolyzes ATP and a membrane integral complex (V0) that translocates protons. V-ATPase is responsible for acidifying and maintaining the pH of intracellular compartments. The polypeptide is V-type proton ATPase subunit F (VMA7) (Vanderwaltozyma polyspora (strain ATCC 22028 / DSM 70294 / BCRC 21397 / CBS 2163 / NBRC 10782 / NRRL Y-8283 / UCD 57-17) (Kluyveromyces polysporus)).